Consider the following 257-residue polypeptide: Hydroxyethylthiazole kinase (257 aa).

Met49 serves as a coordination point for substrate. ATP is bound by residues Arg124 and Thr170. Residue Gly197 coordinates substrate.

This sequence belongs to the Thz kinase family. Requires Mg(2+) as cofactor.

It catalyses the reaction 5-(2-hydroxyethyl)-4-methylthiazole + ATP = 4-methyl-5-(2-phosphooxyethyl)-thiazole + ADP + H(+). The protein operates within cofactor biosynthesis; thiamine diphosphate biosynthesis; 4-methyl-5-(2-phosphoethyl)-thiazole from 5-(2-hydroxyethyl)-4-methylthiazole: step 1/1. Its function is as follows. Catalyzes the phosphorylation of the hydroxyl group of 4-methyl-5-beta-hydroxyethylthiazole (THZ). In Klebsiella pneumoniae (strain 342), this protein is Hydroxyethylthiazole kinase.